The following is a 277-amino-acid chain: Probable redox regulatory protein ML2435 (277 aa).

This sequence belongs to the Rv0495c family.

Its function is as follows. Essential for maintaining intracellular redox homeostasis. The protein is Probable redox regulatory protein ML2435 of Mycobacterium leprae (strain TN).